The chain runs to 154 residues: Myoglobin (154 aa).

The Globin domain maps to 2 to 148 (GLSDGEWQLV…FRNDIAAKYK (147 aa)). The residue at position 4 (serine 4) is a Phosphoserine. Histidine 65 contacts nitrite. Histidine 65 is an O2 binding site. Threonine 68 carries the post-translational modification Phosphothreonine. Heme b is bound at residue histidine 94.

Belongs to the globin family. As to quaternary structure, monomeric.

It is found in the cytoplasm. It localises to the sarcoplasm. The catalysed reaction is Fe(III)-heme b-[protein] + nitric oxide + H2O = Fe(II)-heme b-[protein] + nitrite + 2 H(+). The enzyme catalyses H2O2 + AH2 = A + 2 H2O. Monomeric heme protein which primary function is to store oxygen and facilitate its diffusion within muscle tissues. Reversibly binds oxygen through a pentacoordinated heme iron and enables its timely and efficient release as needed during periods of heightened demand. Depending on the oxidative conditions of tissues and cells, and in addition to its ability to bind oxygen, it also has a nitrite reductase activity whereby it regulates the production of bioactive nitric oxide. Under stress conditions, like hypoxia and anoxia, it also protects cells against reactive oxygen species thanks to its pseudoperoxidase activity. This Tupaia glis (Common tree shrew) protein is Myoglobin (MB).